Reading from the N-terminus, the 471-residue chain is Ribosomal protein uS12 methylthiotransferase RimO (471 aa).

An MTTase N-terminal domain is found at 2 to 122; sequence IKVSLISLGC…VAPIIQEIYA (121 aa). Cys-11, Cys-47, Cys-84, Cys-166, Cys-170, and Cys-173 together coordinate [4Fe-4S] cluster. The Radical SAM core domain occupies 152–395; it reads LTPKHFAYVK…MALQKQIAAD (244 aa). In terms of domain architecture, TRAM spans 398-458; the sequence is KTYVGRTLRV…DYDLLALPPG (61 aa).

This sequence belongs to the methylthiotransferase family. RimO subfamily. Requires [4Fe-4S] cluster as cofactor.

It localises to the cytoplasm. It catalyses the reaction L-aspartate(89)-[ribosomal protein uS12]-hydrogen + (sulfur carrier)-SH + AH2 + 2 S-adenosyl-L-methionine = 3-methylsulfanyl-L-aspartate(89)-[ribosomal protein uS12]-hydrogen + (sulfur carrier)-H + 5'-deoxyadenosine + L-methionine + A + S-adenosyl-L-homocysteine + 2 H(+). Catalyzes the methylthiolation of an aspartic acid residue of ribosomal protein uS12. This Opitutus terrae (strain DSM 11246 / JCM 15787 / PB90-1) protein is Ribosomal protein uS12 methylthiotransferase RimO.